A 497-amino-acid polypeptide reads, in one-letter code: Keratin, type II cytoskeletal 8 (497 aa).

The head stretch occupies residues 2–108 (TSYQRTVTVR…DPRIGQVRLE (107 aa)). The coil 1A stretch occupies residues 109 to 149 (EKEQIKTLNNQFAGFIDKVRYLEQQNKLLETKWQLLQNQTT). One can recognise an IF rod domain in the interval 109–421 (EKEQIKTLNN…KLLEGEESRL (313 aa)). The linker 1 stretch occupies residues 145-162 (QNQTTPSRSNLDSMFEAY). The coil 1B stretch occupies residues 163–254 (ISNLRRQLDT…QIYDEEIREL (92 aa)). Positions 255 to 278 (QTQIQDTSVIVQMDNNRQLDLDNI) are linker 12. The interval 279–417 (IAEVRAQYED…ATYRKLLEGE (139 aa)) is coil 2. The tail stretch occupies residues 418-497 (ESRLASGIQA…VSERSNIVKE (80 aa)).

The protein belongs to the intermediate filament family. As to quaternary structure, heterotetramer of two type I and two type II keratins. Keratin-8 associates with keratin-18. Expressed in skin.

It localises to the cytoplasm. The protein localises to the nucleus. Its subcellular location is the nucleoplasm. It is found in the nucleus matrix. Its function is as follows. Together with KRT19, helps to link the contractile apparatus to dystrophin at the costameres of striated muscle. This chain is Keratin, type II cytoskeletal 8, found in Protopterus aethiopicus (Marbled lungfish).